The following is a 654-amino-acid chain: Sphingosine kinase 2 (654 aa).

A compositionally biased stretch (basic and acidic residues) spans 1-17 (MNGHLEAEEQQDQRPDQ). Residues 1-28 (MNGHLEAEEQQDQRPDQELTGSWGHGPR) form a disordered region. The tract at residues 1-175 (MNGHLEAEEQ…LPGDGEITPD (175 aa)) is required for binding to sulfatide and phosphoinositides and for membrane localizatione. The Nuclear localization signal motif lies at 122 to 130 (RGRRGARRR). In terms of domain architecture, DAGKc spans 178–325 (PRPPRLLLLV…LDLLSVTLAS (148 aa)). ATP is bound by residues 188 to 190 (NPF) and 220 to 224 (TERQN). 245-248 (SGDG) is a binding site for substrate. Asp-247 functions as the Proton donor/acceptor in the catalytic mechanism. ATP contacts are provided by residues Glu-252 and 277 to 279 (GSG). A substrate-binding site is contributed by Asp-344. Residues Arg-351 and Arg-357 each contribute to the ATP site. Residue Ser-387 is modified to Phosphoserine; by MAPK. Phosphoserine is present on residues Ser-393 and Ser-399. A disordered region spans residues 400-509 (ELTLTPDPAP…PLPTPDARVG (110 aa)). A Nuclear export signal motif is present at residues 416–425 (LHRSVSDLPL). A phosphoserine; by PKD mark is found at Ser-419 and Ser-421. A compositionally biased stretch (gly residues) spans 447-461 (NGGGPELAGDWGGAG). A compositionally biased stretch (low complexity) spans 462-482 (DAPLSPDPLLSSPPGSPKAAL). Ser-477 carries the post-translational modification Phosphoserine. The residue at position 614 (Thr-614) is a Phosphothreonine; by MAPK. Position 622-624 (622-624 (DGE)) interacts with ATP.

In terms of assembly, interacts with histone H3. Interacts with HDAC1, HDAC2, MBD2 and SIN3A. Interacts with EEF1A1; the interaction enhances SPHK2 kinase activity. Interacts with PHB2. Mg(2+) is required as a cofactor. Post-translationally, phosphorylated by PKD on Ser-419 and Ser-421 upon PMA treatment. Phosphorylation induces export from the nucleus to the cytoplasm. Phosphorylated by MAPK1 and MAPK2 at Ser-387 and Thr-614, phosphorylation is induced by agonists such as EGF and PMA and increases kinase activity. Cleaved by CASP1 in apoptotic cells. The truncated form is released from cells. As to expression, mainly expressed in adult kidney, liver, and brain. Expressed in cerebral cortex and hippocampus (at protein level). Isoform 1 is the predominant form expressed in most tissues.

It localises to the cytoplasm. The protein localises to the nucleus. Its subcellular location is the endoplasmic reticulum. It is found in the mitochondrion inner membrane. The protein resides in the lysosome membrane. The enzyme catalyses a sphingoid base + ATP = a sphingoid 1-phosphate + ADP + H(+). It catalyses the reaction sphing-4-enine + ATP = sphing-4-enine 1-phosphate + ADP + H(+). It carries out the reaction sphinganine + ATP = sphinganine 1-phosphate + ADP + H(+). The catalysed reaction is (4R)-hydroxysphinganine + ATP = (4R)-hydroxysphinganine 1-phosphate + ADP + H(+). Inhibited by sulfatide. Kinase activity is increased by phosphorylation by MAPK2 upon PMA or EGF treatments. Its function is as follows. Catalyzes the phosphorylation of sphingosine to form sphingosine-1-phosphate (SPP), a lipid mediator with both intra- and extracellular functions. Also acts on D-erythro-dihydrosphingosine, D-erythro-sphingosine and L-threo-dihydrosphingosine. Binds phosphoinositides. In contrast to prosurvival SPHK1, has a positive effect on intracellular ceramide levels, inhibits cells growth and enhances apoptosis. In mitochondria, is important for cytochrome-c oxidase assembly and mitochondrial respiration. The SPP produced in mitochondria binds PHB2 and modulates the regulation via PHB2 of complex IV assembly and respiration. In nucleus, plays a role in epigenetic regulation of gene expression. Interacts with HDAC1 and HDAC2 and, through SPP production, inhibits their enzymatic activity, preventing the removal of acetyl groups from lysine residues with histones. Up-regulates acetylation of histone H3-K9, histone H4-K5 and histone H2B-K12. In nucleus, may have an inhibitory effect on DNA synthesis and cell cycle. In mast cells, is the main regulator of SPP production which mediates calcium influx, NF-kappa-B activation, cytokine production, such as TNF and IL6, and degranulation of mast cells. In dopaminergic neurons, is involved in promoting mitochondrial functions regulating ATP and ROS levels. Also involved in the regulation of glucose and lipid metabolism. The polypeptide is Sphingosine kinase 2 (Homo sapiens (Human)).